A 239-amino-acid polypeptide reads, in one-letter code: Ion-translocating oxidoreductase complex subunit E (239 aa).

A run of 5 helical transmembrane segments spans residues 41–61 (LGLGLATLLVLVCSNAAVSLV), 71–91 (LPAFVMIIAALTTCIELLMQA), 95–115 (ELYQILGIFIPLITTNCVILG), 130–150 (SFDGLLTGLGFALVLLVLGGL), and 184–204 (GFLLAILPPGAFIMLGLLIAL).

The protein belongs to the NqrDE/RnfAE family. In terms of assembly, the complex is composed of six subunits: RnfA, RnfB, RnfC, RnfD, RnfE and RnfG.

The protein resides in the cell inner membrane. Its function is as follows. Part of a membrane-bound complex that couples electron transfer with translocation of ions across the membrane. This is Ion-translocating oxidoreductase complex subunit E from Pseudomonas paraeruginosa (strain DSM 24068 / PA7) (Pseudomonas aeruginosa (strain PA7)).